The chain runs to 160 residues: G-protein-signaling modulator 3 (160 aa).

A disordered region spans residues 1 to 55 (MEAERPQEEEDGEQGPPQDEEGWPPPNSTTRPWRSAPPSPPPPGTRHTALGPRSA). Positions 7–22 (QEEEDGEQGPPQDEEG) are enriched in acidic residues. Phosphoserine occurs at positions 35, 39, 56, and 59. The span at 35–44 (SAPPSPPPPG) shows a compositional bias: pro residues. Threonine 62 carries the phosphothreonine modification. 3 consecutive GoLoco domains span residues 62–84 (TELLLDLVAEAQSRRLEEQRATF), 104–126 (REQLYSTILSHQCQRMEAQRSEP), and 132–155 (GQELLELLLRVQGGGRMEEQRSRP).

Expressed in heart, placenta, lung and liver.

It is found in the cytoplasm. Functionally, interacts with subunit of G(i) alpha proteins and regulates the activation of G(i) alpha proteins. This chain is G-protein-signaling modulator 3 (GPSM3), found in Homo sapiens (Human).